The following is a 595-amino-acid chain: Aspartate--tRNA ligase (595 aa).

L-aspartate is bound at residue Glu-173. Positions 197 to 200 (QLFK) are aspartate. Arg-219 serves as a coordination point for L-aspartate. Residues 219–221 (RDE) and Gln-228 contribute to the ATP site. His-449 is a binding site for L-aspartate. ATP is bound at residue Glu-483. Arg-490 is an L-aspartate binding site. Residue 535-538 (GLDR) coordinates ATP.

Belongs to the class-II aminoacyl-tRNA synthetase family. Type 1 subfamily. As to quaternary structure, homodimer.

The protein resides in the cytoplasm. The catalysed reaction is tRNA(Asp) + L-aspartate + ATP = L-aspartyl-tRNA(Asp) + AMP + diphosphate. Catalyzes the attachment of L-aspartate to tRNA(Asp) in a two-step reaction: L-aspartate is first activated by ATP to form Asp-AMP and then transferred to the acceptor end of tRNA(Asp). The sequence is that of Aspartate--tRNA ligase from Shewanella sediminis (strain HAW-EB3).